The following is a 221-amino-acid chain: Phosphoribosylformylglycinamidine synthase subunit PurQ (221 aa).

A Glutamine amidotransferase type-1 domain is found at 6–221; the sequence is VGVVVFPGSN…LFTLKSLILK (216 aa). Catalysis depends on Cys-89, which acts as the Nucleophile. Catalysis depends on residues His-197 and Glu-199.

Part of the FGAM synthase complex composed of 1 PurL, 1 PurQ and 2 PurS subunits.

It is found in the cytoplasm. It catalyses the reaction N(2)-formyl-N(1)-(5-phospho-beta-D-ribosyl)glycinamide + L-glutamine + ATP + H2O = 2-formamido-N(1)-(5-O-phospho-beta-D-ribosyl)acetamidine + L-glutamate + ADP + phosphate + H(+). The enzyme catalyses L-glutamine + H2O = L-glutamate + NH4(+). It functions in the pathway purine metabolism; IMP biosynthesis via de novo pathway; 5-amino-1-(5-phospho-D-ribosyl)imidazole from N(2)-formyl-N(1)-(5-phospho-D-ribosyl)glycinamide: step 1/2. Its function is as follows. Part of the phosphoribosylformylglycinamidine synthase complex involved in the purines biosynthetic pathway. Catalyzes the ATP-dependent conversion of formylglycinamide ribonucleotide (FGAR) and glutamine to yield formylglycinamidine ribonucleotide (FGAM) and glutamate. The FGAM synthase complex is composed of three subunits. PurQ produces an ammonia molecule by converting glutamine to glutamate. PurL transfers the ammonia molecule to FGAR to form FGAM in an ATP-dependent manner. PurS interacts with PurQ and PurL and is thought to assist in the transfer of the ammonia molecule from PurQ to PurL. In Prochlorococcus marinus (strain MIT 9312), this protein is Phosphoribosylformylglycinamidine synthase subunit PurQ.